Here is a 101-residue protein sequence, read N- to C-terminus: Chaperone modulatory protein CbpM (101 aa).

It belongs to the CbpM family.

Interacts with CbpA and inhibits both the DnaJ-like co-chaperone activity and the DNA binding activity of CbpA. Together with CbpA, modulates the activity of the DnaK chaperone system. Does not inhibit the co-chaperone activity of DnaJ. The protein is Chaperone modulatory protein CbpM of Pseudomonas putida (strain W619).